The chain runs to 101 residues: Small ribosomal subunit protein uS14 (101 aa).

This sequence belongs to the universal ribosomal protein uS14 family. In terms of assembly, part of the 30S ribosomal subunit. Contacts proteins S3 and S10.

Functionally, binds 16S rRNA, required for the assembly of 30S particles and may also be responsible for determining the conformation of the 16S rRNA at the A site. The protein is Small ribosomal subunit protein uS14 of Ruegeria pomeroyi (strain ATCC 700808 / DSM 15171 / DSS-3) (Silicibacter pomeroyi).